A 227-amino-acid polypeptide reads, in one-letter code: Isopentenyl-diphosphate Delta-isomerase 1 (227 aa).

Position 36 (Lys-36) interacts with substrate. 2 residues coordinate Mg(2+): His-40 and His-51. The region spanning 49-199 (LLHRAFSVFL…EVKLTPWFKI (151 aa)) is the Nudix hydrolase domain. The substrate site is built by Arg-70 and Lys-74. Cys-86 is a catalytic residue. Substrate is bound at residue Ser-87. 2 residues coordinate Mg(2+): Glu-146 and Glu-148. Residue Glu-148 is part of the active site. The residue at position 176 (Lys-176) is an N6-acetyllysine. Residues 225-227 (HRM) carry the Microbody targeting signal motif.

It belongs to the IPP isomerase type 1 family. As to quaternary structure, monomer. Requires Mg(2+) as cofactor.

It is found in the peroxisome. The catalysed reaction is isopentenyl diphosphate = dimethylallyl diphosphate. It functions in the pathway isoprenoid biosynthesis; dimethylallyl diphosphate biosynthesis; dimethylallyl diphosphate from isopentenyl diphosphate: step 1/1. Functionally, catalyzes the 1,3-allylic rearrangement of the homoallylic substrate isopentenyl (IPP) to its highly electrophilic allylic isomer, dimethylallyl diphosphate (DMAPP). In Mesocricetus auratus (Golden hamster), this protein is Isopentenyl-diphosphate Delta-isomerase 1 (IDI1).